The primary structure comprises 149 residues: MQRQTGHMEDKKRTGLESQGTENAFSDGRDGKDGLLHEGINEPILIPSTIADLEGIRELVRKFRGRLLPFEKCPDFCLRIGGLEASFHKGQEELLEYCEALYLPQPVKMEIVGIVDDVPGGENLPCSIAVDTIKSRHHGSLLTFFSHYH.

Basic and acidic residues predominate over residues 1-15 (MQRQTGHMEDKKRTG). A disordered region spans residues 1–32 (MQRQTGHMEDKKRTGLESQGTENAFSDGRDGK).

This is an uncharacterized protein from Gallus gallus (Chicken).